The chain runs to 486 residues: Keratin, type II cuticular Hb6 (486 aa).

Residues 1 to 106 (MTCGSYCGGR…PNAQCVKHEE (106 aa)) form a head region. The IF rod domain occupies 106 to 417 (EKEQIKCLNS…RLLEGEEQRL (312 aa)). The tract at residues 107-141 (KEQIKCLNSKFAAFIDKVRFLEQQNKLLETKWQFY) is coil 1A. The linker 1 stretch occupies residues 142-151 (QNRKCCESNM). The interval 152-252 (EPLFEGYIEA…YDEETRILHS (101 aa)) is coil 1B. A Glycyl lysine isopeptide (Lys-Gly) (interchain with G-Cter in SUMO1) cross-link involves residue lysine 212. The tract at residues 253-269 (HISDTSIVVKMDNSRDL) is linker 12. The segment at 270-413 (NMDCVVAEIK…TTYRRLLEGE (144 aa)) is coil 2. The interval 414–486 (EQRLCEGVGS…GACSGGCKKC (73 aa)) is tail.

Belongs to the intermediate filament family. Heterotetramer of two type I and two type II keratins.

This Mus musculus (Mouse) protein is Keratin, type II cuticular Hb6 (Krt86).